We begin with the raw amino-acid sequence, 410 residues long: Formyl-CoA:oxalate CoA-transferase (410 aa).

Residues 18–19, 72–75, 96–98, R104, and 136–139 contribute to the CoA site; these read QS, LNTK, NFG, and KAYE. The Nucleophile role is filled by D168. A disordered region spans residues 221 to 245; sequence PLAEYPNEDFGDEVPRSGNASGGGQ. A substrate-binding site is contributed by 243-245; sequence GGQ.

This sequence belongs to the CoA-transferase III family. Frc subfamily. Homodimer.

The catalysed reaction is formyl-CoA + oxalate = oxalyl-CoA + formate. It functions in the pathway metabolic intermediate degradation; oxalate degradation; CO(2) and formate from oxalate: step 1/2. In terms of biological role, involved in the catabolism of oxalate and in the adapatation to low pH via the induction of the oxalate-dependent acid tolerance response (ATR). Catalyzes the transfer of the CoA moiety from formyl-CoA to oxalate. The polypeptide is Formyl-CoA:oxalate CoA-transferase (Streptomyces coelicolor (strain ATCC BAA-471 / A3(2) / M145)).